Here is an 898-residue protein sequence, read N- to C-terminus: Vacuolar protein sorting-associated protein 41 homolog (898 aa).

Basic and acidic residues predominate over residues 1 to 10; the sequence is MDESNDKENE. Residues 1 to 35 are disordered; the sequence is MDESNDKENEFGDSFLEDSGDITRTTEDEDEAPLE. A CHCR repeat occupies 614-756; that stretch reads LRLLLDNADS…VADFPTHFSQ (143 aa). The RING-type; atypical zinc finger occupies 835–890; that stretch reads CSLCSQVIMNTGQDMIPRKFNDIKVFKCGHIFHLTCSASEIDRRQMIEDGICIACS.

The protein belongs to the VPS41 family. Probable component of the homotypic fusion and vacuole protein sorting (HOPS) complex consisting of the core class C Vps proteins vps-11, vps-16, vps-18, and which further associates with vps-33.1, vps-39 and vps-41.

It localises to the endosome membrane. It is found in the late endosome. The protein localises to the lysosome. Its subcellular location is the golgi apparatus. The protein resides in the trans-Golgi network. It localises to the early endosome. It is found in the cytoplasmic vesicle. The protein localises to the clathrin-coated vesicle. Functionally, plays a role in vesicle-mediated protein trafficking to lysosomal compartments including the endocytic membrane transport pathways. Believed to act in part as a core component of the putative HOPS endosomal tethering complex which is proposed to be involved in the rab-5-to-rab-7 endosome conversion probably implicating sand-1, and via binding SNAREs and SNARE complexes to mediate tethering and docking events during SNARE-mediated membrane fusion. The HOPS complex is proposed to be recruited to rab-7 on the late endosomal membrane and to regulate late endocytic, phagocytic and autophagic traffic towards lysosomes. Within the HOPS complex, contributes to the normal development of gut granules in the adult intestine. May mediate the tethering of autophagosomes with lysosomes. Has a role in the negative regulation of apoptosis. Required for uptake of exogenous dsRNA which is used in experimental RNA silencing. This Caenorhabditis briggsae protein is Vacuolar protein sorting-associated protein 41 homolog.